The primary structure comprises 377 residues: MAENLLPRGDDLAQQENNGFGPLFKRRGRTAAITSAIIGVSSGAMLFLAVKEEEKKTHFLVFTAALLTLSFAFGELLRRLSLVSEEIQHKHTRHQGKWKSVFKTTFTFDHGGCISLTAMFSALILCYQLYEQYEVFSRSDFAILFSVNCLVVPQLLFLVGLRQLSPVETSDLNEKENKNVADGLAWSYYFGYLKLVLPHLKDQIAKSEQFRYKIKKKKLFILLPKTCFTHADIVDADPRVKWAGNLPELKISRGGIKDRIYKHAVHKIEMPRPDGTMDEYHFILEYATSLMTLYDMSQHADAPLSRKERDHQVVLFIRKLREILDKSEECRGSYELVPISGNDPNEIANVLVGMHNAANIEVLAGNHDQANGVIRPE.

4 helical membrane passes run 30–50, 57–77, 106–126, and 141–161; these read TAAI…FLAV, THFL…GELL, FTFD…LILC, and FAIL…LVGL.

This sequence belongs to the STING family.

Its subcellular location is the membrane. Functionally, facilitator of innate immune signaling that acts as a sensor of second messenger signals produced by cyclic GMP-AMP synthase-like receptors (cGLRs) and promotes the production of type I interferon. Innate immune response is triggered in response to nucleotides from viruses and bacteria delivered to the cytoplasm. Acts by binding cyclic dinucleotides: recognizes and binds a large variety of 2'-3'- and 3'-3' linked cyclic dinucleotides (2'-3'-cGAMP, 3'-3'-cGAMP, 2',3'-cUAMP, 3',3'-cUAMP and/or 3',3'-c-di-GMP) second messengers produced by cGLRs in response to nucleotides in the cytosol, such as double-stranded RNA (dsRNA). Upon binding to cyclic dinucleotides, oligomerizes and promotes the recruitment and subsequent activation of the transcription factor IRF3 to induce expression of type I interferon. The protein is Stimulator of interferon genes protein 7 of Stylophora pistillata (Smooth cauliflower coral).